A 231-amino-acid polypeptide reads, in one-letter code: Dephospho-CoA kinase domain-containing protein (231 aa).

Residues 3 to 207 enclose the DPCK domain; sequence LVGLTGGIAS…RSLEYLPLRF (205 aa). 8-15 contributes to the ATP binding site; that stretch reads GGIASGKS.

The protein belongs to the CoaE family.

The chain is Dephospho-CoA kinase domain-containing protein (DCAKD) from Homo sapiens (Human).